The chain runs to 188 residues: dCTP deaminase (188 aa).

Residues 111-116, 135-137, Gln156, Tyr170, and Gln180 each bind dCTP; these read KSTYAR and TLE. Glu137 serves as the catalytic Proton donor/acceptor.

The protein belongs to the dCTP deaminase family. Homotrimer.

The catalysed reaction is dCTP + H2O + H(+) = dUTP + NH4(+). Its pathway is pyrimidine metabolism; dUMP biosynthesis; dUMP from dCTP (dUTP route): step 1/2. In terms of biological role, catalyzes the deamination of dCTP to dUTP. The polypeptide is dCTP deaminase (Dichelobacter nodosus (strain VCS1703A)).